We begin with the raw amino-acid sequence, 734 residues long: Photosystem I P700 chlorophyll a apoprotein A2 (734 aa).

Helical transmembrane passes span 46–69, 135–158, 175–199, 273–291, 330–353, 369–395, 417–439, and 517–535; these read IFAS…FHVA, LYTG…LHLQ, LNHH…HVAI, MAHH…GHMY, IHFQ…QHMY, AALY…IFFI, AIIS…LYVH, and FLVH…LILV. Residues C559 and C568 each contribute to the [4Fe-4S] cluster site. 2 helical membrane passes run 575-596 and 643-665; these read AFYL…YWHW and LSVW…MFLI. Chlorophyll a contacts are provided by H654, M662, and Y670. W671 lines the phylloquinone pocket. The helical transmembrane segment at 707–727 threads the bilayer; sequence LVGLAHFSVGYIFTYAAFLIA.

This sequence belongs to the PsaA/PsaB family. As to quaternary structure, the PsaA/B heterodimer binds the P700 chlorophyll special pair and subsequent electron acceptors. PSI consists of a core antenna complex that captures photons, and an electron transfer chain that converts photonic excitation into a charge separation. The eukaryotic PSI reaction center is composed of at least 11 subunits. P700 is a chlorophyll a/chlorophyll a' dimer, A0 is one or more chlorophyll a, A1 is one or both phylloquinones and FX is a shared 4Fe-4S iron-sulfur center. serves as cofactor.

It is found in the plastid. The protein localises to the chloroplast thylakoid membrane. The enzyme catalyses reduced [plastocyanin] + hnu + oxidized [2Fe-2S]-[ferredoxin] = oxidized [plastocyanin] + reduced [2Fe-2S]-[ferredoxin]. Its function is as follows. PsaA and PsaB bind P700, the primary electron donor of photosystem I (PSI), as well as the electron acceptors A0, A1 and FX. PSI is a plastocyanin-ferredoxin oxidoreductase, converting photonic excitation into a charge separation, which transfers an electron from the donor P700 chlorophyll pair to the spectroscopically characterized acceptors A0, A1, FX, FA and FB in turn. Oxidized P700 is reduced on the lumenal side of the thylakoid membrane by plastocyanin. The protein is Photosystem I P700 chlorophyll a apoprotein A2 of Lepidium virginicum (Virginia pepperweed).